Reading from the N-terminus, the 433-residue chain is MELKIVSSEIIKPSSPTPQHLRTHKLSVLDQVAGDSLFPVILFYPQACSNDTTKTSDHLKKSLSETLSKYHPFAGRFKDAFSIDCDDSGAVFVEACVAGEMSEILKQPKNDLLEELMPYKLNEKPSVPVNLAAKVTYFGCGGMALCVCFSHVIADITTAANFIKSWVAISRGFSTSNDIPDTFFDCSTVFPPQDFSSFSRNAFADNHSQSAEIITKRFTFDGVKLADLKEKIRKESSSGYQPTRVEAVSAVILGGIMSAEKEGEKFNHTNLVPSVSVNLRNRTNPPLPELSIGNIIQAAITKLPIEKRINYSKLTEQLHGSIRSIDDEYLKKFHAVGEFMNNMQNALIALFDPNNRGFTISSWCRRPLYEADFGWGKPIWVSTAMKHKDVAVLLDSNDGKGIEALVALPKKEMDKFEQDPGILAYASVDTSII.

Residues His-151 and Asp-372 each act as proton acceptor in the active site.

Belongs to the plant acyltransferase family. As to quaternary structure, monomer. As to expression, mainly expressed in petioles and, to a lower extent, in roots.

It carries out the reaction (21S)-21-acetyl-1-hydroxy-apo-melianone + acetyl-CoA = epi-neemfruitin B + acetate + CoA + H(+). Its pathway is secondary metabolite biosynthesis; terpenoid biosynthesis. Acetyltransferase involved in the biosynthesis of limonoids triterpene natural products such as azadirachtin, an antifeedant widely used as bioinsecticide, and possessing many medicinal applications including anti-tumoral, anti-malarial, anti-rheumatic, antibacterial, anti-inflammatory, anti-pyretic and diuretic effects. Catalyzes the formation of epi-neemfruitin B from (21S)-21-acetyl-1-hydroxy-apo-melianone. The chain is Epi-neemfruitin B synthase L1AT from Melia azedarach (Chinaberry tree).